Here is a 259-residue protein sequence, read N- to C-terminus: Phosphoribosylaminoimidazole-succinocarboxamide synthase (259 aa).

This sequence belongs to the SAICAR synthetase family.

It carries out the reaction 5-amino-1-(5-phospho-D-ribosyl)imidazole-4-carboxylate + L-aspartate + ATP = (2S)-2-[5-amino-1-(5-phospho-beta-D-ribosyl)imidazole-4-carboxamido]succinate + ADP + phosphate + 2 H(+). Its pathway is purine metabolism; IMP biosynthesis via de novo pathway; 5-amino-1-(5-phospho-D-ribosyl)imidazole-4-carboxamide from 5-amino-1-(5-phospho-D-ribosyl)imidazole-4-carboxylate: step 1/2. The polypeptide is Phosphoribosylaminoimidazole-succinocarboxamide synthase (Hyphomonas neptunium (strain ATCC 15444)).